The primary structure comprises 1396 residues: DNA ligase 6 (1396 aa).

Disordered stretches follow at residues 441–464 (KNAC…DTTP) and 562–599 (MNLT…GPGQ). 2 short sequence motifs (nuclear localization signal) span residues 572 to 579 (GKRGKSSG) and 886 to 893 (LRKISVQT). Position 1037 (Glu-1037) interacts with ATP. The N6-AMP-lysine intermediate role is filled by Lys-1039. ATP is bound by residues Arg-1044, Arg-1060, Glu-1092, and Phe-1136. Glu-1092 is a Mg(2+) binding site. Glu-1207 is a binding site for Mg(2+). The ATP site is built by Lys-1212, Arg-1225, and Lys-1231.

This sequence belongs to the ATP-dependent DNA ligase family. It depends on Mg(2+) as a cofactor. Mostly expressed in buds and flowers, and, to a lower extent, in stems, leaves, siliques and seeds.

It is found in the nucleus. It catalyses the reaction ATP + (deoxyribonucleotide)n-3'-hydroxyl + 5'-phospho-(deoxyribonucleotide)m = (deoxyribonucleotide)n+m + AMP + diphosphate.. DNA ligase that seals nicks in double-stranded DNA during DNA replication, DNA recombination and DNA repair. Required to maintain seed viability (e.g. longevity and storability) and during seed germination, probably by repairing DNA damage accumulated during seed development, storage and/or imbibition. Facilitates seed germination in cold conditions (2 degrees Celsius) and under oxidative stress (e.g. menadione, a genotoxic agent). Involved in repair of X-ray-induced damage. Its function is as follows. Limits stable root transformation by A.tumefaciens T-DNA. The chain is DNA ligase 6 from Arabidopsis thaliana (Mouse-ear cress).